Consider the following 233-residue polypeptide: Lipoprotein-releasing system ATP-binding protein LolD (233 aa).

An ABC transporter domain is found at 6–233; the sequence is LQCDNLCKRY…TAELSLMGAE (228 aa). Residue 42–49 coordinates ATP; sequence GSSGSGKS.

Belongs to the ABC transporter superfamily. Lipoprotein translocase (TC 3.A.1.125) family. The complex is composed of two ATP-binding proteins (LolD) and two transmembrane proteins (LolC and LolE).

The protein resides in the cell inner membrane. In terms of biological role, part of the ABC transporter complex LolCDE involved in the translocation of mature outer membrane-directed lipoproteins, from the inner membrane to the periplasmic chaperone, LolA. Responsible for the formation of the LolA-lipoprotein complex in an ATP-dependent manner. The protein is Lipoprotein-releasing system ATP-binding protein LolD of Escherichia coli O6:K15:H31 (strain 536 / UPEC).